A 622-amino-acid chain; its full sequence is Low affinity potassium transport system protein Kup (622 aa).

A run of 12 helical transmembrane segments spans residues 9 to 29 (LSAV…TSPL), 46 to 66 (PDVV…VVSV), 101 to 121 (ILVV…VITP), 137 to 157 (PALD…LFVI), 165 to 185 (VGKL…LLGL), 213 to 233 (VSFF…ALYA), 247 to 267 (WFTV…ALLL), 276 to 296 (PFFL…ATLA), 337 to 357 (IYIP…IIGF), 363 to 383 (LAAA…ILFC), 395 to 415 (FLVV…FSAN), and 416 to 436 (VLKL…MFII).

The protein belongs to the HAK/KUP transporter (TC 2.A.72) family.

The protein localises to the cell inner membrane. It carries out the reaction K(+)(in) + H(+)(in) = K(+)(out) + H(+)(out). Functionally, responsible for the low-affinity transport of potassium into the cell. Likely operates as a K(+):H(+) symporter. This chain is Low affinity potassium transport system protein Kup, found in Yersinia pestis bv. Antiqua (strain Antiqua).